A 347-amino-acid polypeptide reads, in one-letter code: tRNA N6-adenosine threonylcarbamoyltransferase (347 aa).

Positions 115 and 119 each coordinate Fe cation. Residues 137–141 (LASGG), D170, G183, and N281 each bind substrate. D309 provides a ligand contact to Fe cation.

Belongs to the KAE1 / TsaD family. It depends on Fe(2+) as a cofactor.

Its subcellular location is the cytoplasm. The enzyme catalyses L-threonylcarbamoyladenylate + adenosine(37) in tRNA = N(6)-L-threonylcarbamoyladenosine(37) in tRNA + AMP + H(+). Functionally, required for the formation of a threonylcarbamoyl group on adenosine at position 37 (t(6)A37) in tRNAs that read codons beginning with adenine. Is involved in the transfer of the threonylcarbamoyl moiety of threonylcarbamoyl-AMP (TC-AMP) to the N6 group of A37, together with TsaE and TsaB. TsaD likely plays a direct catalytic role in this reaction. This Methylorubrum extorquens (strain CM4 / NCIMB 13688) (Methylobacterium extorquens) protein is tRNA N6-adenosine threonylcarbamoyltransferase.